The sequence spans 4158 residues: Dynein axonemal heavy chain 6 (4158 aa).

The stem stretch occupies residues 1–1433; that stretch reads MTFRATDSEF…VARMALSQYT (1433 aa). 192–199 serves as a coordination point for ATP; sequence IIRENEHL. The stretch at 805-859 forms a coiled coil; the sequence is CVHLGSDLEELNNEVNEVKLQAQDPQILDISADQDKIRLILNNLQSVLADLQKRA. AAA regions lie at residues 1434–1655, 1715–1948, 2058–2306, and 2408–2659; these read YGYE…VLVM, STIV…KKCS, KYNR…CVQG, and DYNL…LRRR. ATP-binding positions include 1472–1479, 1753–1760, 2096–2103, and 2447–2454; these read GPAGTGKT, GPTGGGKT, GITGVGKS, and GVGGTGKQ. Positions 2676–2961 are stalk; that stretch reads SMLSEKRKQI…KTMALTKARL (286 aa). The stretch at 2901-2996 forms a coiled coil; it reads KRQKLRAAQA…EEISNITGNV (96 aa). 2 AAA regions span residues 3042 to 3272 and 3509 to 3730; these read LGDP…AIKT and LTDF…NLKL.

It belongs to the dynein heavy chain family. The dynein complex consists of at least two heavy chains and a number of intermediate and light chains. In terms of tissue distribution, expressed in several tissues, including brain, pituitary, testis and trachea, with highest levels in testis.

It is found in the cytoplasm. The protein localises to the cytoskeleton. It localises to the cilium axoneme. Force generating protein of respiratory cilia. Produces force towards the minus ends of microtubules. Dynein has ATPase activity; the force-producing power stroke is thought to occur on release of ADP. The protein is Dynein axonemal heavy chain 6 of Homo sapiens (Human).